Here is a 253-residue protein sequence, read N- to C-terminus: Ubiquinone biosynthesis O-methyltransferase (253 aa).

Residues arginine 41, glycine 72, aspartate 93, and methionine 136 each coordinate S-adenosyl-L-methionine.

It belongs to the methyltransferase superfamily. UbiG/COQ3 family.

It catalyses the reaction a 3-demethylubiquinol + S-adenosyl-L-methionine = a ubiquinol + S-adenosyl-L-homocysteine + H(+). The enzyme catalyses a 3-(all-trans-polyprenyl)benzene-1,2-diol + S-adenosyl-L-methionine = a 2-methoxy-6-(all-trans-polyprenyl)phenol + S-adenosyl-L-homocysteine + H(+). Its pathway is cofactor biosynthesis; ubiquinone biosynthesis. In terms of biological role, O-methyltransferase that catalyzes the 2 O-methylation steps in the ubiquinone biosynthetic pathway. The sequence is that of Ubiquinone biosynthesis O-methyltransferase from Chelativorans sp. (strain BNC1).